A 716-amino-acid chain; its full sequence is Fatty acid oxidation complex subunit alpha (716 aa).

The segment at 1 to 189 (MIYQSPTIQV…KVGAVDSVVA (189 aa)) is enoyl-CoA hydratase/isomerase. Position 296 (aspartate 296) interacts with substrate. Positions 311–716 (KEVNNAAVLG…AANNGSYYQA (406 aa)) are 3-hydroxyacyl-CoA dehydrogenase. NAD(+)-binding positions include methionine 324, aspartate 343, 400-402 (VVE), lysine 407, and serine 429. Histidine 450 functions as the For 3-hydroxyacyl-CoA dehydrogenase activity in the catalytic mechanism. Asparagine 453 is an NAD(+) binding site. Substrate-binding residues include asparagine 500 and tyrosine 660.

The protein in the N-terminal section; belongs to the enoyl-CoA hydratase/isomerase family. This sequence in the C-terminal section; belongs to the 3-hydroxyacyl-CoA dehydrogenase family. As to quaternary structure, heterotetramer of two alpha chains (FadB) and two beta chains (FadA).

It carries out the reaction a (3S)-3-hydroxyacyl-CoA + NAD(+) = a 3-oxoacyl-CoA + NADH + H(+). The enzyme catalyses a (3S)-3-hydroxyacyl-CoA = a (2E)-enoyl-CoA + H2O. It catalyses the reaction a 4-saturated-(3S)-3-hydroxyacyl-CoA = a (3E)-enoyl-CoA + H2O. The catalysed reaction is (3S)-3-hydroxybutanoyl-CoA = (3R)-3-hydroxybutanoyl-CoA. It carries out the reaction a (3Z)-enoyl-CoA = a 4-saturated (2E)-enoyl-CoA. The enzyme catalyses a (3E)-enoyl-CoA = a 4-saturated (2E)-enoyl-CoA. The protein operates within lipid metabolism; fatty acid beta-oxidation. Its function is as follows. Involved in the aerobic and anaerobic degradation of long-chain fatty acids via beta-oxidation cycle. Catalyzes the formation of 3-oxoacyl-CoA from enoyl-CoA via L-3-hydroxyacyl-CoA. It can also use D-3-hydroxyacyl-CoA and cis-3-enoyl-CoA as substrate. The chain is Fatty acid oxidation complex subunit alpha from Shewanella baltica (strain OS185).